A 375-amino-acid chain; its full sequence is WAT1-related protein At1g70260 (375 aa).

A run of 10 helical transmembrane segments spans residues 10-30, 41-61, 72-92, 106-126, 143-163, 191-211, 225-245, 259-278, 289-309, and 312-332; these read LVPF…TIMA, FVFV…FSFL, IFSW…IFMF, IVVC…SIIL, MGTI…GPFI, WFLG…FNVV, VASF…LFME, LYLI…SVHV, VPLF…SFFV, and LHYG…TVSW. The region spanning 25-134 is the EamA domain; it reads ALTIMAKTAL…ILGRSKLDWR (110 aa). Residues 337–356 form a disordered region; it reads ESEEKQSSNEERKSIKTIHH.

Belongs to the drug/metabolite transporter (DMT) superfamily. Plant drug/metabolite exporter (P-DME) (TC 2.A.7.4) family.

It is found in the membrane. The protein is WAT1-related protein At1g70260 of Arabidopsis thaliana (Mouse-ear cress).